The chain runs to 230 residues: Cutinase (230 aa).

An N-terminal signal peptide occupies residues 1-16; sequence MKFFALTTFLAATASA. A disulfide bond links C47 and C125. Residue S136 is the Nucleophile of the active site. A disulfide bond links C187 and C194. The active site involves D191. H204 (proton donor/acceptor) is an active-site residue.

The protein belongs to the cutinase family. Post-translationally, the 2 disulfide bonds play a critical role in holding the catalytic residues in juxta-position; reduction of the disulfide bridges results in the complete inactivation of the enzyme.

The protein resides in the secreted. The enzyme catalyses cutin + H2O = cutin monomers.. Its function is as follows. Catalyzes the hydrolysis of complex carboxylic polyesters found in the cell wall of plants. Degrades cutin, a macromolecule that forms the structure of the plant cuticle. Allows pathogenic fungi to penetrate through the cuticular barrier into the host plant during the initial stage of fungal infection. The chain is Cutinase (CUTA) from Fusarium solani subsp. cucurbitae (Neocosmosporum cucurbitae).